A 473-amino-acid chain; its full sequence is Chromosomal replication initiator protein DnaA (473 aa).

Positions 1-87 are domain I, interacts with DnaA modulators; it reads MADGEESISV…LAVTTFAIVV (87 aa). Positions 87–132 are domain II; the sequence is VNPEIQQESLSTVGEPEPTPAPYLDVATFTVAPPAEITAPPRNGDT. The domain III, AAA+ region stretch occupies residues 133-349; sequence RLNSKYSFDN…GTLIRVTAFA (217 aa). Residues G177, G179, K180, and T181 each coordinate ATP. Residues 350–473 are domain IV, binds dsDNA; the sequence is SLNRTPVDMP…LTSRIKQNHR (124 aa).

The protein belongs to the DnaA family. As to quaternary structure, oligomerizes as a right-handed, spiral filament on DNA at oriC.

The protein localises to the cytoplasm. Its function is as follows. Plays an essential role in the initiation and regulation of chromosomal replication. ATP-DnaA binds to the origin of replication (oriC) to initiate formation of the DNA replication initiation complex once per cell cycle. Binds the DnaA box (a 9 base pair repeat at the origin) and separates the double-stranded (ds)DNA. Forms a right-handed helical filament on oriC DNA; dsDNA binds to the exterior of the filament while single-stranded (ss)DNA is stabiized in the filament's interior. The ATP-DnaA-oriC complex binds and stabilizes one strand of the AT-rich DNA unwinding element (DUE), permitting loading of DNA polymerase. After initiation quickly degrades to an ADP-DnaA complex that is not apt for DNA replication. Binds acidic phospholipids. This Leifsonia xyli subsp. xyli (strain CTCB07) protein is Chromosomal replication initiator protein DnaA.